The primary structure comprises 423 residues: Flotillin-1 (423 aa).

The protein belongs to the band 7/mec-2 family. Flotillin subfamily. Heterooligomeric complex of flotillin-1 and flotillin-2 and caveolin-1 and caveolin-2. Normally expressed in growing retinal exons of newly differentiated ganglion cells at the retinal margin. After optic nerve injury, expressed in all retinal ganglion cells and retinal axons. Also expressed in endothelial cells, spinal cord, larval and adult skin, muscle processes, thymus and gill macrophages.

It is found in the cell membrane. It localises to the endosome. Its subcellular location is the membrane. The protein localises to the caveola. The protein resides in the melanosome. It is found in the membrane raft. In terms of biological role, may act as a scaffolding protein within caveolar membranes, functionally participating in formation of caveolae or caveolae-like vesicles. This Carassius auratus (Goldfish) protein is Flotillin-1 (flot1).